Consider the following 123-residue polypeptide: Large ribosomal subunit protein bL12 (123 aa).

The protein belongs to the bacterial ribosomal protein bL12 family. As to quaternary structure, homodimer. Part of the ribosomal stalk of the 50S ribosomal subunit. Forms a multimeric L10(L12)X complex, where L10 forms an elongated spine to which 2 to 4 L12 dimers bind in a sequential fashion. Binds GTP-bound translation factors.

Forms part of the ribosomal stalk which helps the ribosome interact with GTP-bound translation factors. Is thus essential for accurate translation. The polypeptide is Large ribosomal subunit protein bL12 (Neisseria gonorrhoeae (strain NCCP11945)).